A 372-amino-acid chain; its full sequence is Pre-small/secreted glycoprotein (372 aa).

Positions 1–32 are cleaved as a signal peptide; it reads MEGLSLLQLPRDKFRKSSFFVWVIILFQKAFS. Residue Asn-40 is glycosylated (N-linked (GlcNAc...) asparagine; by host). 2 disulfide bridges follow: Cys-108–Cys-135 and Cys-121–Cys-147. Asn-204, Asn-208, Asn-238, Asn-257, and Asn-268 each carry an N-linked (GlcNAc...) asparagine; by host glycan. The interval 320-340 is disordered; it reads MRHRRELQREESPTGPPGSIR.

The protein belongs to the filoviruses glycoprotein family. In terms of assembly, homodimer; disulfide-linked. The homodimers are linked by two disulfide bonds in a parallel orientation. Monomer. Post-translationally, this precursor is processed into mature sGP and delta-peptide by host furin or furin-like proteases. The cleavage site corresponds to the furin optimal cleavage sequence [KR]-X-[KR]-R. In terms of processing, N-glycosylated. O-glycosylated.

The protein localises to the secreted. Its function is as follows. Seems to possess an anti-inflammatory activity as it can reverse the barrier-decreasing effects of TNF alpha. Might therefore contribute to the lack of inflammatory reaction seen during infection in spite the of extensive necrosis and massive virus production. Does not seem to be involved in activation of primary macrophages. Does not seem to interact specifically with neutrophils. Viroporin that permeabilizes mammalian cell plasma membranes. It acts by altering permeation of ionic compounds and small molecules. This activity may lead to viral enterotoxic activity. This is Pre-small/secreted glycoprotein (GP) from Sudan ebolavirus (strain Boniface-76) (SEBOV).